Here is a 359-residue protein sequence, read N- to C-terminus: MKLGCVLMAWALYLSLGVLWVAQMLLAASFETLQCEGPVCTEESSCHTEDDLTDAREAGFQVKAYTFSEPFHLIVSYDWLILQGPAKPVFEGDLLVLRCQAWQDWPLTQVTFYRDGSALGPPGPNREFSITVVQKADSGHYHCSGIFQSPGPGIPETASVVAITVQELFPAPILRAVPSAEPQAGSPMTLSCQTKLPLQRSAARLLFSFYKDGRIVQSRGLSSEFQIPTASEDHSGSYWCEAATEDNQVWKQSPQLEIRVQGASSSAAPPTLNPAPQKSAAPGTAPEEAPGPLPPPPTPSSEDPGFSSPLGMPDPHLYHQMGLLLKHMQDVRVLLGHLLMELRELSGHRKPGTTKATAE.

An N-terminal signal peptide occupies residues 1–27 (MKLGCVLMAWALYLSLGVLWVAQMLLA). Ig-like C2-type domains lie at 70–159 (PFHL…ETAS) and 170–257 (PAPI…PQLE). Cystine bridges form between C99/C143 and C192/C240. The interval 259–313 (RVQGASSSAAPPTLNPAPQKSAAPGTAPEEAPGPLPPPPTPSSEDPGFSSPLGMP) is disordered. A compositionally biased stretch (low complexity) spans 279-288 (SAAPGTAPEE). The span at 289-299 (APGPLPPPPTP) shows a compositional bias: pro residues.

As to quaternary structure, monomer or homodimer; disulfide-linked. As to expression, expressed specifically in primary and secondary lymphoid tissues like lymph node, spleen and tonsil. Specifically expressed in B-cells with a high level in normal germinal center B-cells, centroblasts and in a subset of diffuse large B-cell lymphomas. Highly expressed in bone marrow B-cells and weakly in earlier B lineage cells. Expressed in pre-germinal and germinal center B-cells in secondary lymphoid tissues. Also expressed in melanoma and melanocytes.

The protein localises to the cytoplasm. Functionally, may be implicated in B-cell differentiation and lymphomagenesis. The protein is Fc receptor-like A (FCRLA) of Homo sapiens (Human).